A 469-amino-acid polypeptide reads, in one-letter code: MSFEQKQHVASEDQGHFNTAYSHEEFNFLQSSLTRKLGPEYVSRRSGPGGFSVSYIESWKAIELANEIFGFNGWSSSIRSINVDFMDENKENGRISLGLSVIVRVTIKDGAYHEDIGYGSIDNCRGKASAFEKCKKEGTTDALKRALRNFGNSLGNCMYDKYYLREVGKMKPPTYHFDSGDLFRKTDPAARESFIKKQKTLNSTRTVNNQPLVNKGEQLAPRRAAELNDEQTREIEMYADEELDNIFVEDDIIAHLAVAEDTAHPAANNHHSEKAGTQINNKDKGSHNSAKPVQRSHTYPVAVPQNTSDSVGNAVTDTSPKTLFDPLKPNTGTPSPKFISARAAAAAEGVVSAPFTNNFNPRLDSPSIRKTSIIDHSKSLPVQRASVLPIIKQSSQTSPVSNNSMIRDSESIINERKENIGLIGVKRSLHDSTTSHNKSDLMRTNSDPQSAMRSRENYDATVDKKAKKG.

The disordered stretch occupies residues 265–296 (PAANNHHSEKAGTQINNKDKGSHNSAKPVQRS). The segment covering 287-296 (HNSAKPVQRS) has biased composition (polar residues). 2 positions are modified to phosphoserine: serine 296 and serine 319. The tract at residues 429–469 (LHDSTTSHNKSDLMRTNSDPQSAMRSRENYDATVDKKAKKG) is disordered. Over residues 431-452 (DSTTSHNKSDLMRTNSDPQSAM) the composition is skewed to polar residues. Basic and acidic residues predominate over residues 453–469 (RSRENYDATVDKKAKKG).

The protein belongs to the RAD52 family. As to quaternary structure, interacts with rhp51.

The protein resides in the nucleus. Functionally, active in the repair of DNA damage and in mating-type switching. Probably involved in the repair of DNA double-strands breaks. Has a role in promoting S phase completion. The chain is DNA repair and recombination protein rad22 (rad22) from Schizosaccharomyces pombe (strain 972 / ATCC 24843) (Fission yeast).